The sequence spans 240 residues: DNA repair protein RecO (240 aa).

The protein belongs to the RecO family.

In terms of biological role, involved in DNA repair and RecF pathway recombination. This is DNA repair protein RecO from Xanthomonas euvesicatoria pv. vesicatoria (strain 85-10) (Xanthomonas campestris pv. vesicatoria).